The chain runs to 153 residues: Ribosome maturation factor RimP (153 aa).

It belongs to the RimP family.

It localises to the cytoplasm. Its function is as follows. Required for maturation of 30S ribosomal subunits. The sequence is that of Ribosome maturation factor RimP from Histophilus somni (strain 2336) (Haemophilus somnus).